Consider the following 149-residue polypeptide: Interleukin-2 (149 aa).

The signal sequence occupies residues 1–20 (MYRMQLLSCIALTLAVLANS). Threonine 23 carries O-linked (GalNAc...) threonine glycosylation. A disulfide bridge connects residues cysteine 78 and cysteine 121. Residue asparagine 106 is glycosylated (N-linked (GlcNAc...) asparagine).

It belongs to the IL-2 family.

The protein resides in the secreted. Functionally, cytokine produced by activated CD4-positive helper T-cells and to a lesser extend activated CD8-positive T-cells and natural killer (NK) cells that plays pivotal roles in the immune response and tolerance. Binds to a receptor complex composed of either the high-affinity trimeric IL-2R (IL2RA/CD25, IL2RB/CD122 and IL2RG/CD132) or the low-affinity dimeric IL-2R (IL2RB and IL2RG). Interaction with the receptor leads to oligomerization and conformation changes in the IL-2R subunits resulting in downstream signaling starting with phosphorylation of JAK1 and JAK3. In turn, JAK1 and JAK3 phosphorylate the receptor to form a docking site leading to the phosphorylation of several substrates including STAT5. This process leads to activation of several pathways including STAT, phosphoinositide-3-kinase/PI3K and mitogen-activated protein kinase/MAPK pathways. Functions as a T-cell growth factor and can increase NK-cell cytolytic activity as well. Promotes strong proliferation of activated B-cells and subsequently immunoglobulin production. Plays a pivotal role in regulating the adaptive immune system by controlling the survival and proliferation of regulatory T-cells, which are required for the maintenance of immune tolerance. Moreover, participates in the differentiation and homeostasis of effector T-cell subsets, including Th1, Th2, Th17 as well as memory CD8-positive T-cells. The polypeptide is Interleukin-2 (IL2) (Equus caballus (Horse)).